Reading from the N-terminus, the 83-residue chain is NAD(P)H-quinone oxidoreductase subunit L (83 aa).

2 helical membrane-spanning segments follow: residues 18 to 38 (IGGY…LLFF) and 53 to 73 (FSVY…APFL).

This sequence belongs to the complex I NdhL subunit family. As to quaternary structure, NDH-1 can be composed of about 15 different subunits; different subcomplexes with different compositions have been identified which probably have different functions.

It is found in the cellular thylakoid membrane. The catalysed reaction is a plastoquinone + NADH + (n+1) H(+)(in) = a plastoquinol + NAD(+) + n H(+)(out). It carries out the reaction a plastoquinone + NADPH + (n+1) H(+)(in) = a plastoquinol + NADP(+) + n H(+)(out). NDH-1 shuttles electrons from an unknown electron donor, via FMN and iron-sulfur (Fe-S) centers, to quinones in the respiratory and/or the photosynthetic chain. The immediate electron acceptor for the enzyme in this species is believed to be plastoquinone. Couples the redox reaction to proton translocation, and thus conserves the redox energy in a proton gradient. Cyanobacterial NDH-1 also plays a role in inorganic carbon-concentration. The sequence is that of NAD(P)H-quinone oxidoreductase subunit L from Synechococcus sp. (strain CC9311).